The primary structure comprises 647 residues: Exoribonuclease 2 (647 aa).

Residues 192-520 (REDLTALSFV…NHRLLKAIIS (329 aa)) enclose the RNB domain. The region spanning 565–647 (ESTFNAEIID…ETRNIVARPI (83 aa)) is the S1 motif domain.

It belongs to the RNR ribonuclease family. RNase II subfamily.

It localises to the cytoplasm. It catalyses the reaction Exonucleolytic cleavage in the 3'- to 5'-direction to yield nucleoside 5'-phosphates.. Involved in mRNA degradation. Hydrolyzes single-stranded polyribonucleotides processively in the 3' to 5' direction. In Proteus mirabilis (strain HI4320), this protein is Exoribonuclease 2.